We begin with the raw amino-acid sequence, 413 residues long: Arginine biosynthesis bifunctional protein ArgJ (413 aa).

Positions 158, 184, 195, 285, 408, and 413 each coordinate substrate. Catalysis depends on Thr195, which acts as the Nucleophile.

This sequence belongs to the ArgJ family. In terms of assembly, heterotetramer of two alpha and two beta chains.

Its subcellular location is the cytoplasm. It catalyses the reaction N(2)-acetyl-L-ornithine + L-glutamate = N-acetyl-L-glutamate + L-ornithine. The catalysed reaction is L-glutamate + acetyl-CoA = N-acetyl-L-glutamate + CoA + H(+). It functions in the pathway amino-acid biosynthesis; L-arginine biosynthesis; L-ornithine and N-acetyl-L-glutamate from L-glutamate and N(2)-acetyl-L-ornithine (cyclic): step 1/1. Its pathway is amino-acid biosynthesis; L-arginine biosynthesis; N(2)-acetyl-L-ornithine from L-glutamate: step 1/4. Functionally, catalyzes two activities which are involved in the cyclic version of arginine biosynthesis: the synthesis of N-acetylglutamate from glutamate and acetyl-CoA as the acetyl donor, and of ornithine by transacetylation between N(2)-acetylornithine and glutamate. The protein is Arginine biosynthesis bifunctional protein ArgJ of Brucella suis biovar 1 (strain 1330).